The chain runs to 424 residues: Probable biofilm formation methyltransferase WspC (424 aa).

In terms of domain architecture, CheR-type methyltransferase spans 1–263 (MNEQRFFRFL…IAQSFAYVRH (263 aa)). S-adenosyl-L-methionine is bound by residues threonine 68, arginine 72, glutamate 109, aspartate 133, 187 to 188 (NV), and 206 to 207 (RN). A TPR repeat occupies 355–388 (AQVYYWLGLLSDTEGDAQQALSHYRKALYLEPQH).

In terms of assembly, monomer. The TPR repeat does not mediate self-association.

In terms of biological role, involved in biofilm formation. The polypeptide is Probable biofilm formation methyltransferase WspC (wspC) (Pseudomonas putida (strain ATCC 47054 / DSM 6125 / CFBP 8728 / NCIMB 11950 / KT2440)).